The chain runs to 91 residues: Large ribosomal subunit protein uL29 (91 aa).

The segment at 67 to 91 is disordered; that stretch reads AAPLAESSAPAKTKSRARKSKKEAL. A compositionally biased stretch (basic residues) spans 79–91; that stretch reads TKSRARKSKKEAL.

The protein belongs to the universal ribosomal protein uL29 family.

This chain is Large ribosomal subunit protein uL29, found in Acidobacterium capsulatum (strain ATCC 51196 / DSM 11244 / BCRC 80197 / JCM 7670 / NBRC 15755 / NCIMB 13165 / 161).